The sequence spans 105 residues: N(2)-fixation sustaining protein CowN (105 aa).

It belongs to the CowN family.

In terms of biological role, is required to sustain N(2)-dependent growth in the presence of low levels of carbon monoxide (CO). Probably acts by protecting the N(2) fixation ability of the nitrogenase complex, which is inactivated in the presence of CO. This Tolumonas auensis (strain DSM 9187 / NBRC 110442 / TA 4) protein is N(2)-fixation sustaining protein CowN.